A 160-amino-acid chain; its full sequence is Ureidoglycolate lyase (160 aa).

The protein belongs to the ureidoglycolate lyase family. As to quaternary structure, homodimer. Ni(2+) is required as a cofactor.

The enzyme catalyses (S)-ureidoglycolate = urea + glyoxylate. It participates in nitrogen metabolism; (S)-allantoin degradation. Functionally, catalyzes the catabolism of the allantoin degradation intermediate (S)-ureidoglycolate, generating urea and glyoxylate. Involved in the anaerobic utilization of allantoin as sole nitrogen source. Reinforces the induction of genes involved in the degradation of allantoin and glyoxylate by producing glyoxylate. The protein is Ureidoglycolate lyase of Escherichia coli (strain K12 / MC4100 / BW2952).